A 762-amino-acid polypeptide reads, in one-letter code: Lysyl oxidase homolog 2B (762 aa).

The first 20 residues, 1–20, serve as a signal peptide directing secretion; sequence MLALWSISFVLLCSWRLSYA. 4 consecutive SRCR domains span residues 53–154, 183–292, 316–417, and 427–536; these read LRLA…VVCS, IRPI…VSCI, VRLR…VKCN, and LRLS…VSCS. Disulfide bonds link Cys79–Cys143, Cys92–Cys153, Cys123–Cys133, Cys213–Cys281, Cys226–Cys291, Cys260–Cys270, Cys341–Cys406, Cys354–Cys416, and Cys385–Cys395. The N-linked (GlcNAc...) asparagine glycan is linked to Asn278. Asn447 carries an N-linked (GlcNAc...) asparagine glycan. 3 cysteine pairs are disulfide-bonded: Cys456–Cys522, Cys469–Cys535, and Cys503–Cys513. Positions 540 to 742 are lysyl-oxidase like; that stretch reads PDLVLNPQVV…WMYNCHIGGS (203 aa). Asp541 and Leu542 together coordinate Ca(2+). Disulfide bonds link Cys565-Cys616, Cys571-Cys686, Cys648-Cys664, and Cys654-Cys676. 3 residues coordinate Cu cation: His617, His619, and His621. N-linked (GlcNAc...) asparagine glycosylation is present at Asn635. The segment at residues 644 to 680 is a cross-link (lysine tyrosylquinone (Lys-Tyr)); sequence KASFCLEDSECDEGIEKRYECANFGEQGITVGCWDTY. At Tyr680 the chain carries 2',4',5'-topaquinone. 4 residues coordinate Ca(2+): Glu713, Asp715, Asn718, and Asn719. A disulfide bridge connects residues Cys723 and Cys737.

It belongs to the lysyl oxidase family. Requires Cu cation as cofactor. It depends on lysine tyrosylquinone residue as a cofactor. Post-translationally, the lysine tyrosylquinone cross-link (LTQ) is generated by condensation of the epsilon-amino group of a lysine with a topaquinone produced by oxidation of tyrosine.

Its subcellular location is the secreted. It localises to the extracellular space. The protein localises to the extracellular matrix. The protein resides in the basement membrane. It is found in the nucleus. Its subcellular location is the chromosome. It localises to the endoplasmic reticulum. It carries out the reaction L-lysyl-[protein] + O2 + H2O = (S)-2-amino-6-oxohexanoyl-[protein] + H2O2 + NH4(+). Its function is as follows. Mediates the post-translational oxidative deamination of lysine residues on target proteins leading to the formation of deaminated lysine (allysine). Acts as a transcription corepressor and specifically mediates deamination of trimethylated 'Lys-4' of histone H3 (H3K4me3), a specific tag for epigenetic transcriptional activation. Shows no activity against histone H3 when it is trimethylated on 'Lys-9' (H3K9me3) or 'Lys-27' (H3K27me3) or when 'Lys-4' is monomethylated (H3K4me1) or dimethylated (H3K4me2). Also mediates deamination of methylated TAF10, a member of the transcription factor IID (TFIID) complex, which induces release of TAF10 from promoters, leading to inhibition of TFIID-dependent transcription. LOXL2-mediated deamination of TAF10 results in transcriptional repression of genes required for embryonic stem cell pluripotency. Involved in epithelial to mesenchymal transition (EMT) and participates in repression of E-cadherin, probably by mediating deamination of histone H3. When secreted into the extracellular matrix, promotes cross-linking of extracellular matrix proteins by mediating oxidative deamination of peptidyl lysine residues in precursors to fibrous collagen and elastin. Acts as a regulator of sprouting angiogenesis, probably via collagen IV scaffolding. Acts as a regulator of chondrocyte differentiation, probably by regulating expression of factors that control chondrocyte differentiation. Required with loxl2a for correct expression of Sox2 and for neural differentiation. The polypeptide is Lysyl oxidase homolog 2B (loxl2b) (Danio rerio (Zebrafish)).